The chain runs to 117 residues: MTVNLHDSAYDLEQALRQSEEYSRLKNLYDEVNGDPSAKKMFDNFRDIQLNLQQKQMNGEDITQEEVEQAQKSVALVQQHEKISQLMEAEQRMSMLIADLNKIIMKPLEELYGNPES.

This sequence belongs to the UPF0342 family.

This is UPF0342 protein BLi01058/BL02870 from Bacillus licheniformis (strain ATCC 14580 / DSM 13 / JCM 2505 / CCUG 7422 / NBRC 12200 / NCIMB 9375 / NCTC 10341 / NRRL NRS-1264 / Gibson 46).